The chain runs to 84 residues: Serine protease inhibitor Kazal-type 2 (84 aa).

An N-terminal signal peptide occupies residues 1–23 (MALSVLRLALLLLAVTFAASLIP). Glutamine 24 is modified (pyrrolidone carboxylic acid). In terms of domain architecture, Kazal-like spans 30-84 (KYRTPNCSQYRLPGCPRHFNPVCGSDMSTYANECTLCMKIREGGHNIKIIRNGPC). Cystine bridges form between cysteine 36–cysteine 66, cysteine 44–cysteine 63, and cysteine 52–cysteine 84.

As to expression, expressed in epididymis (at protein level).

Its subcellular location is the secreted. The protein localises to the cytoplasmic vesicle. It is found in the secretory vesicle. The protein resides in the acrosome. Its function is as follows. As a strong inhibitor of acrosin, it is required for normal spermiogenesis. It probably hinders premature activation of proacrosin and other proteases, thus preventing the cascade of events leading to spermiogenesis defects. May be involved in the regulation of serine protease-dependent germ cell apoptosis. It also inhibits trypsin. The polypeptide is Serine protease inhibitor Kazal-type 2 (SPINK2) (Homo sapiens (Human)).